We begin with the raw amino-acid sequence, 453 residues long: Na(+)/H(+) antiporter NhaA (453 aa).

11 consecutive transmembrane segments (helical) span residues 22–42 (ASLLLFAATIVAMVLANSPWA), 72–92 (MLAFVNDALMAVFFFVIGLEI), 108–128 (LLPIIAACGGMIVPVLFYMLV), 137–157 (GAAIPMATDIAFALAVLGLLG), 166–186 (IFLTALAVVDDIGGIIIIALF), 189–209 (GHIAFEPLLISLIVLALLYVG), 218–238 (LFFYIGGFIVWLLFLESGIHP), 316–336 (PLVNYVILPLFAFVNAGVTFG), 343–363 (LVNVPLAVFVGLFVGKTLGIF), 386–406 (LFGVSMLGGIGFTVALFIANL), and 424–444 (LGVFTGSFISGLCGYLVLKWV).

It belongs to the NhaA Na(+)/H(+) (TC 2.A.33) antiporter family.

The protein resides in the cell inner membrane. The enzyme catalyses Na(+)(in) + 2 H(+)(out) = Na(+)(out) + 2 H(+)(in). In terms of biological role, na(+)/H(+) antiporter that extrudes sodium in exchange for external protons. This chain is Na(+)/H(+) antiporter NhaA, found in Parabacteroides distasonis (strain ATCC 8503 / DSM 20701 / CIP 104284 / JCM 5825 / NCTC 11152).